The primary structure comprises 417 residues: Delta-aminolevulinic acid dehydratase, chloroplastic (417 aa).

Residues 1–40 constitute a chloroplast transit peptide; that stretch reads MAALLVPGGGAAPGLVWRRRRAAVQCAAASPSSPDPSWRT. The segment at 63–92 is disordered; it reads VVSGNPPAAPAAPAKAKAPPGTPVVKPLRL. Lys-286 acts as the Schiff-base intermediate with substrate in catalysis. 2 residues coordinate 5-aminolevulinate: Arg-296 and Lys-308. Residue Glu-324 coordinates Mg(2+). Lys-339 (schiff-base intermediate with substrate) is an active-site residue. Positions 365 and 404 each coordinate 5-aminolevulinate.

This sequence belongs to the ALAD family. As to quaternary structure, homooctamer. The cofactor is Mg(2+).

The protein localises to the plastid. It is found in the chloroplast. It catalyses the reaction 2 5-aminolevulinate = porphobilinogen + 2 H2O + H(+). It functions in the pathway porphyrin-containing compound metabolism; protoporphyrin-IX biosynthesis; coproporphyrinogen-III from 5-aminolevulinate: step 1/4. In terms of biological role, catalyzes an early step in the biosynthesis of tetrapyrroles. Binds two molecules of 5-aminolevulinate per subunit, each at a distinct site, and catalyzes their condensation to form porphobilinogen. The chain is Delta-aminolevulinic acid dehydratase, chloroplastic (HEMB) from Selaginella martensii (Martens's spike moss).